We begin with the raw amino-acid sequence, 56 residues long: Small ribosomal subunit protein uS14 (56 aa).

Residues Cys-21, Cys-24, Cys-39, and Cys-42 each coordinate Zn(2+).

This sequence belongs to the universal ribosomal protein uS14 family. Component of the small ribosomal subunit. Mature ribosomes consist of a small (40S) and a large (60S) subunit. The 40S subunit contains about 32 different proteins and 1 molecule of RNA (18S). The 60S subunit contains 45 different proteins and 3 molecules of RNA (25S, 5.8S and 5S). It depends on Zn(2+) as a cofactor.

The protein resides in the cytoplasm. Its function is as follows. Component of the ribosome, a large ribonucleoprotein complex responsible for the synthesis of proteins in the cell. The small ribosomal subunit (SSU) binds messenger RNAs (mRNAs) and translates the encoded message by selecting cognate aminoacyl-transfer RNA (tRNA) molecules. The large subunit (LSU) contains the ribosomal catalytic site termed the peptidyl transferase center (PTC), which catalyzes the formation of peptide bonds, thereby polymerizing the amino acids delivered by tRNAs into a polypeptide chain. The nascent polypeptides leave the ribosome through a tunnel in the LSU and interact with protein factors that function in enzymatic processing, targeting, and the membrane insertion of nascent chains at the exit of the ribosomal tunnel. This Candida albicans (strain SC5314 / ATCC MYA-2876) (Yeast) protein is Small ribosomal subunit protein uS14.